The primary structure comprises 391 residues: MLADVDYAMAHDGTSILAVNAFKEMEMERVWDPSRIVIPFDHIAPANTETSATLQKEIREWVREQSIPNFYEIGEGICHQVLPENGFALPGKLLVGADSHSCTYGAFGAFATGVGATDMAEIFATGKLWFKVPESFRMTVEGSLDKHVYAKDLTLYLIGKTGIAGATYKAVEFYGQAISELSVAGRMTLCNMAIEMGAKTGIVPPDEKTFDFLKNRAVAPYEPVYSDPDASYLKEFVYDAGDIEPQVACPHQVDNVKPVGEVEGTHVDQVFIGTCTNGRLEDLEVAASVLKGKKVTVRTIIIPASRSTLLAAIKNGTMEILLKAGVTLATPGCGPCLGAHQGVLGEGEVCVSTANRNFKGRMGKDGFIYLASPATAAASALTGEITDPRKI.

3 residues coordinate [4Fe-4S] cluster: Cys275, Cys333, and Cys336.

It belongs to the aconitase/IPM isomerase family. LeuC type 2 subfamily. As to quaternary structure, heterotetramer of 2 HacA and 2 HacB proteins.

It carries out the reaction (2R)-homocitrate = (2R,3S)-homoisocitrate. It catalyses the reaction (2R)-homocitrate = cis-homoaconitate + H2O. The catalysed reaction is (2R,3S)-homoisocitrate = cis-homoaconitate + H2O. The enzyme catalyses cis-(homo)2aconitate + H2O = (2R,3S)-iso(homo)2citrate. It carries out the reaction cis-(homo)3aconitate + H2O = (2R,3S)-iso(homo)3citrate. It functions in the pathway organic acid metabolism; 2-oxosuberate biosynthesis. Component of a hydro-lyase with broad substrate specificity for cis-unsaturated tricarboxylic acids. Catalyzes both the reversible dehydration of (R)-homocitrate ((R)-2-hydroxybutane-1,2,4-tricarboxylate) to produce cis-homoaconitate ((Z)-but-1-ene-1,2,4-tricarboxylate), and its hydration to homoisocitrate ((1R,2S)-1-hydroxybutane-1,2,4-tricarboxylate). Is also able to hydrate the analogous longer chain substrates cis-homo(2)-aconitate, cis-homo(3)-aconitate. These reactions are part of the biosynthesis pathway of coenzyme B. The chain is Probable methanogen homoaconitase large subunit (hacA) from Methanosarcina mazei (strain ATCC BAA-159 / DSM 3647 / Goe1 / Go1 / JCM 11833 / OCM 88) (Methanosarcina frisia).